Consider the following 96-residue polypeptide: DNA-directed RNA polymerase subunit Rpo11 (96 aa).

It belongs to the archaeal Rpo11/eukaryotic RPB11/RPC19 RNA polymerase subunit family. In terms of assembly, part of the RNA polymerase complex.

The protein resides in the cytoplasm. It catalyses the reaction RNA(n) + a ribonucleoside 5'-triphosphate = RNA(n+1) + diphosphate. Functionally, DNA-dependent RNA polymerase (RNAP) catalyzes the transcription of DNA into RNA using the four ribonucleoside triphosphates as substrates. This is DNA-directed RNA polymerase subunit Rpo11 from Haloquadratum walsbyi (strain DSM 16790 / HBSQ001).